The following is a 62-amino-acid chain: Photosystem II reaction center protein Z (62 aa).

Transmembrane regions (helical) follow at residues 8–28 (TVLA…VIFA) and 41–61 (FSGA…NSFV).

The protein belongs to the PsbZ family. As to quaternary structure, PSII is composed of 1 copy each of membrane proteins PsbA, PsbB, PsbC, PsbD, PsbE, PsbF, PsbH, PsbI, PsbJ, PsbK, PsbL, PsbM, PsbT, PsbY, PsbZ, Psb30/Ycf12, at least 3 peripheral proteins of the oxygen-evolving complex and a large number of cofactors. It forms dimeric complexes.

It is found in the plastid. The protein resides in the chloroplast thylakoid membrane. Functionally, may control the interaction of photosystem II (PSII) cores with the light-harvesting antenna, regulates electron flow through the 2 photosystem reaction centers. PSII is a light-driven water plastoquinone oxidoreductase, using light energy to abstract electrons from H(2)O, generating a proton gradient subsequently used for ATP formation. The protein is Photosystem II reaction center protein Z of Mesostigma viride (Green alga).